Consider the following 499-residue polypeptide: Taxadiene 5-alpha hydroxylase (499 aa).

The chain crosses the membrane as a helical; Signal-anchor span at residues 22–42 (TESFSIALSAIAGILLLLLLF). Cysteine 445 provides a ligand contact to heme.

This sequence belongs to the cytochrome P450 family. It depends on heme as a cofactor.

It is found in the membrane. The enzyme catalyses taxa-4(5),11(12)-diene + reduced [NADPH--hemoprotein reductase] + O2 = taxa-4(20),11-dien-5alpha-ol + oxidized [NADPH--hemoprotein reductase] + H2O + H(+). It participates in alkaloid biosynthesis; taxol biosynthesis; taxa-4(20),11-dien-5alpha-ol from geranylgeranyl diphosphate: step 2/2. Functionally, catalyzes the first oxygenation step of taxol biosynthesis. Can use both taxa-4(5),11(12)-diene and taxa-4(20),11(12)-diene as substrate. The protein is Taxadiene 5-alpha hydroxylase of Taxus cuspidata (Japanese yew).